Here is a 975-residue protein sequence, read N- to C-terminus: Translation initiation factor IF-2 (975 aa).

A compositionally biased stretch (basic and acidic residues) spans 48–63 (DHLRKSHGATDGDKRK). 2 disordered regions span residues 48–84 (DHLR…GKAR) and 96–388 (FVKR…QAPT). Positions 104–115 (ETGADQAQAQTD) are enriched in low complexity. The segment covering 120–177 (AELKRREEEARREAELLEKQAQELRERQERLEREEAERRAREEAAEAERRRAEEEAAA) has biased composition (basic and acidic residues). Residues 178 to 211 (KRAAAAQAEAAQQAAAAREQAQRAQSEPAEQSAQ) are compositionally biased toward low complexity. Positions 212-263 (DEARAAAERAAQREAAKKAEDAAREAADKARAEQEEIRKRREAAEAEARAIR) are enriched in basic and acidic residues. Positions 302 to 330 (KPAGEAAAARPAAKKPASGAPAPAAAPAG) are enriched in low complexity. Positions 359–372 (SSGGVDRGWRGGPK) are enriched in gly residues. A tr-type G domain is found at 475-644 (PRPPVVTVMG…LLQAEVLELK (170 aa)). Residues 484 to 491 (GHVDHGKT) are G1. 484 to 491 (GHVDHGKT) is a binding site for GTP. Residues 509–513 (GITQH) form a G2 region. The G3 stretch occupies residues 530 to 533 (DTPG). GTP-binding positions include 530-534 (DTPGH) and 584-587 (NKID). The tract at residues 584-587 (NKID) is G4. The segment at 620 to 622 (SAK) is G5.

The protein belongs to the TRAFAC class translation factor GTPase superfamily. Classic translation factor GTPase family. IF-2 subfamily.

It is found in the cytoplasm. One of the essential components for the initiation of protein synthesis. Protects formylmethionyl-tRNA from spontaneous hydrolysis and promotes its binding to the 30S ribosomal subunits. Also involved in the hydrolysis of GTP during the formation of the 70S ribosomal complex. The polypeptide is Translation initiation factor IF-2 (Burkholderia pseudomallei (strain 1710b)).